A 237-amino-acid chain; its full sequence is Ribosomal RNA small subunit methyltransferase G (237 aa).

Residues Gly-78, Phe-83, 129–130 (AE), and Arg-148 each bind S-adenosyl-L-methionine.

This sequence belongs to the methyltransferase superfamily. RNA methyltransferase RsmG family.

The protein resides in the cytoplasm. Functionally, specifically methylates the N7 position of a guanine in 16S rRNA. The chain is Ribosomal RNA small subunit methyltransferase G from Streptococcus thermophilus (strain CNRZ 1066).